The following is a 336-amino-acid chain: Serpentine receptor class beta-15 (336 aa).

The next 7 helical transmembrane spans lie at 24–44 (LFIHLFVSISSIIPLIYFVIF), 57–77 (FLFSAYFVSVFLFSVDFAIIS), 109–129 (IFMSLSTFFPISITIERFIAM), 142–162 (LGPILTGCNILLDLLIVFFIY), 186–206 (FTFFWVMFFLNLINFTFNSYL), 237–257 (VFVVFCHVILFGFYVIGIMIL), and 276–296 (GAFTTMISLYNLVVGSVAVYL).

It belongs to the nematode receptor-like protein srb family.

The protein resides in the membrane. The polypeptide is Serpentine receptor class beta-15 (srb-15) (Caenorhabditis elegans).